Reading from the N-terminus, the 177-residue chain is MAEITTIARPYAKAAFDFALEQNAIENWVEMLNFAALVSENETMQPLLSGSLASNQLAELFIGVCGEQINEQAQNLLKVMAENGRLVVLPAVAQLFVEMQHEYAKEVEAQVVSATELTSEQQQEMSASLEKRLARKVKLNCSIDASLIAGVIITAGDLVIDGSVRGKISRLSDTLQS.

Belongs to the ATPase delta chain family. As to quaternary structure, F-type ATPases have 2 components, F(1) - the catalytic core - and F(0) - the membrane proton channel. F(1) has five subunits: alpha(3), beta(3), gamma(1), delta(1), epsilon(1). F(0) has three main subunits: a(1), b(2) and c(10-14). The alpha and beta chains form an alternating ring which encloses part of the gamma chain. F(1) is attached to F(0) by a central stalk formed by the gamma and epsilon chains, while a peripheral stalk is formed by the delta and b chains.

The protein localises to the cell inner membrane. F(1)F(0) ATP synthase produces ATP from ADP in the presence of a proton or sodium gradient. F-type ATPases consist of two structural domains, F(1) containing the extramembraneous catalytic core and F(0) containing the membrane proton channel, linked together by a central stalk and a peripheral stalk. During catalysis, ATP synthesis in the catalytic domain of F(1) is coupled via a rotary mechanism of the central stalk subunits to proton translocation. Functionally, this protein is part of the stalk that links CF(0) to CF(1). It either transmits conformational changes from CF(0) to CF(1) or is implicated in proton conduction. The protein is ATP synthase subunit delta of Shewanella piezotolerans (strain WP3 / JCM 13877).